The chain runs to 151 residues: 3-hydroxyacyl-[acyl-carrier-protein] dehydratase FabZ (151 aa).

Residue His-54 is part of the active site.

The protein belongs to the thioester dehydratase family. FabZ subfamily. Oligomer. In terms of processing, the N-terminus is blocked.

It is found in the cytoplasm. The catalysed reaction is a (3R)-hydroxyacyl-[ACP] = a (2E)-enoyl-[ACP] + H2O. Its function is as follows. Involved in unsaturated fatty acids biosynthesis. Catalyzes the dehydration of short chain beta-hydroxyacyl-ACPs and long chain saturated and unsaturated beta-hydroxyacyl-ACPs. This is 3-hydroxyacyl-[acyl-carrier-protein] dehydratase FabZ from Escherichia coli O9:H4 (strain HS).